The chain runs to 143 residues: Large ribosomal subunit protein uL13 (143 aa).

This sequence belongs to the universal ribosomal protein uL13 family. In terms of assembly, part of the 50S ribosomal subunit.

Functionally, this protein is one of the early assembly proteins of the 50S ribosomal subunit, although it is not seen to bind rRNA by itself. It is important during the early stages of 50S assembly. In Neisseria gonorrhoeae (strain ATCC 700825 / FA 1090), this protein is Large ribosomal subunit protein uL13.